Here is a 165-residue protein sequence, read N- to C-terminus: Phosphopantetheine adenylyltransferase (165 aa).

Serine 9 lines the substrate pocket. ATP contacts are provided by residues 9-10 (SF) and histidine 17. The substrate site is built by lysine 41, isoleucine 75, and arginine 89. Residues 90–92 (GVR), glutamate 100, and 125–131 (YLFVRSD) contribute to the ATP site.

It belongs to the bacterial CoaD family. Homohexamer. It depends on Mg(2+) as a cofactor.

It is found in the cytoplasm. It carries out the reaction (R)-4'-phosphopantetheine + ATP + H(+) = 3'-dephospho-CoA + diphosphate. It participates in cofactor biosynthesis; coenzyme A biosynthesis; CoA from (R)-pantothenate: step 4/5. In terms of biological role, reversibly transfers an adenylyl group from ATP to 4'-phosphopantetheine, yielding dephospho-CoA (dPCoA) and pyrophosphate. The protein is Phosphopantetheine adenylyltransferase of Borrelia turicatae (strain 91E135).